A 163-amino-acid polypeptide reads, in one-letter code: 3-hydroxyacyl-[acyl-carrier-protein] dehydratase FabZ (163 aa).

The active site involves His-64.

This sequence belongs to the thioester dehydratase family. FabZ subfamily.

The protein resides in the cytoplasm. It catalyses the reaction a (3R)-hydroxyacyl-[ACP] = a (2E)-enoyl-[ACP] + H2O. In terms of biological role, involved in unsaturated fatty acids biosynthesis. Catalyzes the dehydration of short chain beta-hydroxyacyl-ACPs and long chain saturated and unsaturated beta-hydroxyacyl-ACPs. This Caulobacter sp. (strain K31) protein is 3-hydroxyacyl-[acyl-carrier-protein] dehydratase FabZ.